Here is a 2161-residue protein sequence, read N- to C-terminus: SH3 and multiple ankyrin repeat domains protein 1 (2161 aa).

A disordered region spans residues methionine 1–serine 53. Residues serine 17–glycine 32 show a composition bias toward low complexity. The span at proline 33–alanine 47 shows a compositional bias: gly residues. The residue at position 186 (tyrosine 186) is a Phosphotyrosine. ANK repeat units lie at residues serine 212–arginine 245, aspartate 246–arginine 278, arginine 279–glutamate 312, asparagine 313–alanine 345, serine 346–asparagine 378, and asparagine 379–leucine 395. Disordered regions lie at residues glutamate 412 to alanine 433 and glycine 455 to arginine 546. A compositionally biased stretch (low complexity) spans glycine 455 to threonine 479. Gly residues predominate over residues proline 527–glycine 542. Serine 540 carries the post-translational modification Phosphoserine. Arginine 544 bears the Omega-N-methylarginine mark. An SH3 domain is found at valine 554 to asparagine 613. The PDZ domain occupies threonine 663–threonine 757. Phosphoserine is present on residues serine 671 and serine 791. The interval threonine 832–leucine 886 is disordered. The residue at position 890 (serine 890) is a Phosphoserine. Disordered regions lie at residues serine 909–threonine 1229, arginine 1241–aspartate 1289, leucine 1353–serine 1720, glycine 1734–proline 1785, leucine 1827–alanine 1860, proline 1892–leucine 1983, and arginine 1996–leucine 2023. A compositionally biased stretch (pro residues) spans isoleucine 920 to proline 939. Omega-N-methylarginine is present on arginine 950. Basic residues predominate over residues alanine 996–proline 1020. Omega-N-methylarginine is present on residues arginine 1051, arginine 1090, and arginine 1101. Residues proline 1127–valine 1144 show a composition bias toward pro residues. Positions serine 1164–proline 1181 are enriched in low complexity. The span at serine 1199–proline 1220 shows a compositional bias: pro residues. Over residues arginine 1241–arginine 1252 the composition is skewed to basic and acidic residues. An Asymmetric dimethylarginine modification is found at arginine 1253. Serine 1287 is modified (phosphoserine). Basic and acidic residues predominate over residues alanine 1359–serine 1368. A compositionally biased stretch (pro residues) spans proline 1374–threonine 1391. The residue at position 1423 (arginine 1423) is an Omega-N-methylarginine. Serine 1436 carries the post-translational modification Phosphoserine. Pro residues-rich tracts occupy residues glycine 1517–threonine 1532 and proline 1583–alanine 1609. Polar residues predominate over residues aspartate 1618–glutamine 1636. A compositionally biased stretch (pro residues) spans aspartate 1644–glycine 1670. A compositionally biased stretch (basic and acidic residues) spans valine 1678 to leucine 1688. Residues serine 1692–alanine 1702 are compositionally biased toward low complexity. 2 stretches are compositionally biased toward gly residues: residues glutamate 1703–valine 1718 and alanine 1764–glycine 1774. A compositionally biased stretch (low complexity) spans glycine 1775–proline 1785. Positions proline 1844–leucine 1855 are enriched in pro residues. Residue arginine 1895 is modified to Omega-N-methylarginine. 3 stretches are compositionally biased toward low complexity: residues serine 1917–leucine 1940, threonine 1954–threonine 1980, and arginine 1996–alanine 2006. 3 positions are modified to omega-N-methylarginine: arginine 2016, arginine 2036, and arginine 2074. Positions tryptophan 2098–arginine 2161 constitute an SAM domain.

The protein belongs to the SHANK family. In terms of assembly, may homomultimerize via its SAM domain. Interacts with the C-terminus of SSTR2 via the PDZ domain. Interacts with IGSF9, SHARPIN, SPTAN1, HOMER1 and DLGAP1/GKAP isoforms 1 and 2. Part of a complex with DLG4/PSD-95 and DLGAP1/GKAP. Interacts with BAIAP2. Interacts with HOMER1 and HOMER3. As to expression, expressed in brain particularly in the amygdala, hippocampus, substantia nigra and thalamus. Isoform 2 seems to be expressed ubiquitously.

It is found in the cytoplasm. Its subcellular location is the postsynaptic density. The protein localises to the synapse. Its function is as follows. Seems to be an adapter protein in the postsynaptic density (PSD) of excitatory synapses that interconnects receptors of the postsynaptic membrane including NMDA-type and metabotropic glutamate receptors via complexes with GKAP/PSD-95 and Homer, respectively, and the actin-based cytoskeleton. Plays a role in the structural and functional organization of the dendritic spine and synaptic junction. The chain is SH3 and multiple ankyrin repeat domains protein 1 (SHANK1) from Homo sapiens (Human).